The following is a 714-amino-acid chain: Polyribonucleotide nucleotidyltransferase (714 aa).

Mg(2+) is bound by residues Asp-489 and Asp-495. The region spanning 556-615 (PKIDTIKIDVDKIKVVIGKGGETIDKIIAETGVKIDIDEEGNVSIYSSDQDAINRAKEII) is the KH domain. The 69-residue stretch at 625 to 693 (GEVYHAKVVR…DKGRIDASMK (69 aa)) folds into the S1 motif domain. The tract at residues 691–714 (SMKALVPRPPKPEKSEAKKEGKHD) is disordered. Basic and acidic residues predominate over residues 700-714 (PKPEKSEAKKEGKHD).

Belongs to the polyribonucleotide nucleotidyltransferase family. Mg(2+) serves as cofactor.

The protein localises to the cytoplasm. The catalysed reaction is RNA(n+1) + phosphate = RNA(n) + a ribonucleoside 5'-diphosphate. Functionally, involved in mRNA degradation. Catalyzes the phosphorolysis of single-stranded polyribonucleotides processively in the 3'- to 5'-direction. This chain is Polyribonucleotide nucleotidyltransferase, found in Streptococcus equi subsp. zooepidemicus (strain MGCS10565).